The primary structure comprises 365 residues: Protein SGT1 homolog (365 aa).

At Ala2 the chain carries N-acetylalanine. TPR repeat units follow at residues 11–44 (SQRFFQSFSDALIDEDPQAALEELTKALEQKPDD), 45–78 (AQYYCQRAYCHILLGNYCVAVADAKKSLELNPNN), and 79–112 (STAMLRKGICEYHEKNYAAALETFTEGQKLDIET). A CS domain is found at 169 to 258 (QSKIKYDWYQ…PEAVRWEKLE (90 aa)). Phosphothreonine is present on Thr265. The region spanning 276 to 365 (LYPSSSPYTR…PPDDMEWKKY (90 aa)) is the SGS domain. Residue Ser281 is modified to Phosphoserine. Thr284 is subject to Phosphothreonine. Lys295 is covalently cross-linked (Glycyl lysine isopeptide (Lys-Gly) (interchain with G-Cter in SUMO1); alternate). Lys295 participates in a covalent cross-link: Glycyl lysine isopeptide (Lys-Gly) (interchain with G-Cter in SUMO2); alternate. Residue Ser331 is modified to Phosphoserine.

The protein belongs to the SGT1 family. Probably associates with SCF (SKP1-CUL1-F-box protein) complex through interaction with SKP1. Interacts with S100A6. Interacts with HSP90. In terms of processing, phosphorylated at Ser-281 and Ser-331, dephosphorylation promotes nuclear translocation, most likely due to disruption of the SUGT1-HSP90 complex.

It localises to the cytoplasm. The protein resides in the nucleus. Functionally, may play a role in ubiquitination and subsequent proteasomal degradation of target proteins. This chain is Protein SGT1 homolog, found in Homo sapiens (Human).